We begin with the raw amino-acid sequence, 531 residues long: NADH-quinone oxidoreductase subunit N (531 aa).

The next 14 membrane-spanning stretches (helical) occupy residues 8 to 28, 41 to 61, 81 to 101, 146 to 166, 172 to 192, 208 to 228, 250 to 270, 282 to 302, 318 to 338, 350 to 370, 372 to 392, 418 to 438, 453 to 473, and 500 to 520; these read VEYF…AGVL, AQVT…IVVA, ATLF…VFMA, GATQ…MMVF, LLTM…MCGL, FLLG…LYGA, ALAG…AVPF, PTPI…GALL, PVLW…AVNQ, VAHV…GLSA, LFYL…VGLV, IVGV…LTSG, GAVP…YFYV, and AAIA…QPVL.

This sequence belongs to the complex I subunit 2 family. NDH-1 is composed of 14 different subunits. Subunits NuoA, H, J, K, L, M, N constitute the membrane sector of the complex.

It is found in the cell membrane. The catalysed reaction is a quinone + NADH + 5 H(+)(in) = a quinol + NAD(+) + 4 H(+)(out). Functionally, NDH-1 shuttles electrons from NADH, via FMN and iron-sulfur (Fe-S) centers, to quinones in the respiratory chain. The immediate electron acceptor for the enzyme in this species is believed to be a menaquinone. Couples the redox reaction to proton translocation (for every two electrons transferred, four hydrogen ions are translocated across the cytoplasmic membrane), and thus conserves the redox energy in a proton gradient. This chain is NADH-quinone oxidoreductase subunit N, found in Mycobacterium bovis (strain ATCC BAA-935 / AF2122/97).